A 457-amino-acid chain; its full sequence is UDP-glycosyltransferase 708C1 (457 aa).

A UDP-alpha-D-glucose-binding site is contributed by glycine 31. The Proton acceptor role is filled by histidine 32. Histidine 32 provides a ligand contact to an anthocyanidin. Threonine 34 provides a ligand contact to UDP-alpha-D-glucose. Asparagine 94 serves as a coordination point for an anthocyanidin. The Charge relay role is filled by aspartate 129. A UDP-alpha-D-glucose-binding site is contributed by threonine 150. Residues 279-280 are UDP; the sequence is NR. The UDP-alpha-D-glucose site is built by valine 341, glutamine 343, histidine 358, tryptophan 361, asparagine 362, serine 363, and glutamate 366. Residue glycine 381 coordinates an anthocyanidin. Positions 382 and 383 each coordinate UDP-alpha-D-glucose.

This sequence belongs to the UDP-glycosyltransferase family. As to expression, expressed in cotyledons. Not detected in flowers, leaves, roots and hypocotyls.

The catalysed reaction is a 3'-hydro-2'-hydroxy-beta-oxodihydrochalcone + UDP-alpha-D-glucose = a 3'-(beta-D-glucopyranosyl)-2'-hydroxy-beta-oxodihydrochalcone + UDP + H(+). In terms of biological role, UDP-glucose-dependent glucosyltransferase catalyzing the C-glucosylation of 2-hydroxyflavanones (2-hydroxynaringenin, 2-hydroxyeriodictyol and 2-hydroxypinocembrin) and phloretin. No activity with flavanones, flavones or flavonols. Exhibits C-glycosylation activity toward 2',4',6'-trihydroxyacetophenone and phloretin using UDP-glucose as sugar donor. Can use UDP-galactose as sugar donor, but catalytic efficiency is 14-fold lower toward UDP-galactose than toward UDP-glucose. This chain is UDP-glycosyltransferase 708C1, found in Fagopyrum esculentum (Common buckwheat).